The sequence spans 628 residues: DNA mismatch repair protein MutL (628 aa).

Positions 332 to 416 (PTSAMPAPGN…ASTAPPLSEE (85 aa)) are disordered. The span at 375 to 396 (EGSSRSDVPYPSASQVTETTDS) shows a compositional bias: polar residues.

This sequence belongs to the DNA mismatch repair MutL/HexB family.

In terms of biological role, this protein is involved in the repair of mismatches in DNA. It is required for dam-dependent methyl-directed DNA mismatch repair. May act as a 'molecular matchmaker', a protein that promotes the formation of a stable complex between two or more DNA-binding proteins in an ATP-dependent manner without itself being part of a final effector complex. In Syntrophotalea carbinolica (strain DSM 2380 / NBRC 103641 / GraBd1) (Pelobacter carbinolicus), this protein is DNA mismatch repair protein MutL.